The following is a 414-amino-acid chain: Ankyrin repeat domain-containing protein 10 (414 aa).

ANK repeat units lie at residues 18–47 (TLRF…RSDL), 54–83 (YGWT…SVNA), 88–117 (FAQT…NINK), 121–150 (VGET…QIDL), and 154–187 (SGLT…RYYS). The disordered stretch occupies residues 310 to 332 (GVTSPSRHRIHTSNGTEEPEKAM).

This is Ankyrin repeat domain-containing protein 10 (ANKRD10) from Gallus gallus (Chicken).